Here is a 231-residue protein sequence, read N- to C-terminus: Orotidine 5'-phosphate decarboxylase (231 aa).

Residues Asp11, Lys33, 60 to 69, Thr117, Arg178, Gln187, Gly207, and Arg208 contribute to the substrate site; that span reads DLKFHDIPNT. The Proton donor role is filled by Lys62.

The protein belongs to the OMP decarboxylase family. Type 1 subfamily. As to quaternary structure, homodimer.

It carries out the reaction orotidine 5'-phosphate + H(+) = UMP + CO2. The protein operates within pyrimidine metabolism; UMP biosynthesis via de novo pathway; UMP from orotate: step 2/2. In terms of biological role, catalyzes the decarboxylation of orotidine 5'-monophosphate (OMP) to uridine 5'-monophosphate (UMP). This is Orotidine 5'-phosphate decarboxylase from Nitrosomonas europaea (strain ATCC 19718 / CIP 103999 / KCTC 2705 / NBRC 14298).